The chain runs to 309 residues: Testis-expressed protein 264 homolog (309 aa).

Residues 1–3 (MPD) are Lumenal-facing. A helical; Signal-anchor for type III membrane protein transmembrane segment spans residues 4 to 24 (LLLLGLIGALTLLLLLTLLAF). The Cytoplasmic portion of the chain corresponds to 25 to 309 (AGYSGLLTGV…ELSTPERGEE (285 aa)). A disordered region spans residues 193–309 (PEVKETERKC…ELSTPERGEE (117 aa)). Low complexity predominate over residues 208 to 225 (ATDTQTDGTGADTSDASS). S238 and S243 each carry phosphoserine. The segment covering 250-262 (GWDDGDNRSEHSY) has biased composition (basic and acidic residues). Residues 263–272 (SESGASGSSF) are compositionally biased toward low complexity. The LIR motif signature appears at 272–275 (FEEL).

In terms of assembly, interacts (via the LIR motif) with ATG8 family proteins MAP1LC3A, MAP1LC3B, GABARAP and GABARAPL1. Interacts with VCP/p97; bridging VCP/p97 to covalent DNA-protein cross-links (DPCs). Interacts with TOP1 (when sumoylated).

The protein localises to the endoplasmic reticulum membrane. It localises to the cytoplasmic vesicle. It is found in the autophagosome. The protein resides in the cytoplasm. Its subcellular location is the cytosol. The protein localises to the nucleus. It localises to the chromosome. Major reticulophagy (also called ER-phagy) receptor that acts independently of other candidate reticulophagy receptors to remodel subdomains of the endoplasmic reticulum into autophagosomes upon nutrient stress, which then fuse with lysosomes for endoplasmic reticulum turnover. The ATG8-containing isolation membrane (IM) cradles a tubular segment of TEX264-positive ER near a three-way junction, allowing the formation of a synapse of 2 juxtaposed membranes with trans interaction between the TEX264 and ATG8 proteins. Expansion of the IM would extend the capture of ER, possibly through a 'zipper-like' process involving continued trans TEX264-ATG8 interactions, until poorly understood mechanisms lead to the fission of relevant membranes and, ultimately, autophagosomal membrane closure. Also involved in the repair of covalent DNA-protein cross-links (DPCs) during DNA synthesis: acts by bridging VCP/p97 to covalent DNA-protein cross-links (DPCs) and initiating resolution of DPCs by SPRTN. The chain is Testis-expressed protein 264 homolog from Mus musculus (Mouse).